The sequence spans 163 residues: Protein-export protein SecB (163 aa).

It belongs to the SecB family. Homotetramer, a dimer of dimers. One homotetramer interacts with 1 SecA dimer.

It is found in the cytoplasm. Its function is as follows. One of the proteins required for the normal export of preproteins out of the cell cytoplasm. It is a molecular chaperone that binds to a subset of precursor proteins, maintaining them in a translocation-competent state. It also specifically binds to its receptor SecA. The sequence is that of Protein-export protein SecB from Shewanella woodyi (strain ATCC 51908 / MS32).